Consider the following 75-residue polypeptide: uncharacterized protein (75 aa).

Transmembrane regions (helical) follow at residues 7 to 26 (LINA…AASA) and 36 to 58 (MHLF…FCPV).

It is found in the cell membrane. This is an uncharacterized protein from Bacillus subtilis (strain 168).